Consider the following 182-residue polypeptide: Ferritin heavy chain (182 aa).

At M1 the chain carries N-acetylmethionine. At T2 the chain carries N-acetylthreonine; in Ferritin heavy chain, N-terminally processed. The Ferritin-like diiron domain maps to Q11–G160. 5 residues coordinate Fe cation: E28, E63, H66, E108, and Q142.

It belongs to the ferritin family. In terms of assembly, oligomer of 24 subunits. There are two types of subunits: L (light) chain and H (heavy) chain. The major chain can be light or heavy, depending on the species and tissue type. The functional molecule forms a roughly spherical shell with a diameter of 12 nm and contains a central cavity into which the insoluble mineral iron core is deposited. Interacts with NCOA4; NCOA4 promotes targeting of the iron-binding ferritin complex to autolysosomes following starvation or iron depletion.

It localises to the cytoplasm. The protein resides in the lysosome. Its subcellular location is the cytoplasmic vesicle. It is found in the autophagosome. The enzyme catalyses 4 Fe(2+) + O2 + 4 H(+) = 4 Fe(3+) + 2 H2O. Its function is as follows. Stores iron in a soluble, non-toxic, readily available form. Important for iron homeostasis. Has ferroxidase activity. Iron is taken up in the ferrous form and deposited as ferric hydroxides after oxidation. Also plays a role in delivery of iron to cells. Mediates iron uptake in capsule cells of the developing kidney. Delivery to lysosomes is mediated by the cargo receptor NCOA4 for autophagic degradation and release of iron. In Equus caballus (Horse), this protein is Ferritin heavy chain (FTH1).